Here is a 1616-residue protein sequence, read N- to C-terminus: Replicase large subunit (1616 aa).

The segment at 50–458 (FSKVVSEEQT…QSLSMTFFLH (409 aa)) is methyltransferase. One can recognise an Alphavirus-like MT domain in the interval 72–281 (TFYNTQNAVH…HSYSNILKYV (210 aa)). One can recognise a (+)RNA virus helicase ATP-binding domain in the interval 801–963 (VVYSDMAKLR…KLEVDEVETR (163 aa)). The segment at 830 to 1085 (LVDGVPGCGK…RHTKSLKYYT (256 aa)) is helicase. ATP is bound by residues 836–841 (GCGKTK), Arg868, 967–968 (LR), Arg1076, and 1097–1100 (DLER). The region spanning 964–1116 (RTTLRCPADV…DMYKVDAGTQ (153 aa)) is the (+)RNA virus helicase C-terminal domain. The RdRp catalytic domain occupies 1380-1493 (MDVLELDVSK…YFPKGCEYPD (114 aa)).

It belongs to the ssRNA positive-strand viruses RNA-directed RNA polymerase family. As to quaternary structure, heterodimer of a large and a small subunit. May interact with the host proteins TOM1 and ARL8. Interacts via an ATP bridge, with host protein Tm-1 (e.g. tomato Tm-1 AC A7M6E7).

It carries out the reaction RNA(n) + a ribonucleoside 5'-triphosphate = RNA(n+1) + diphosphate. The catalysed reaction is ATP + H2O = ADP + phosphate + H(+). In resistant plants, is bound by host protein Tm-1 (e.g. tomato Tm-1 AC A7M6E7), thereby inhibiting replication complex activity. Is an RNA-dependent RNA polymerase active in viral RNA replication. Its function is as follows. Is a methyltransferase active in RNA capping and an RNA helicase. Methyltransferase displays a cytoplasmic capping enzyme activity. This function is necessary since all viral RNAs are synthesized in the cytoplasm, and host capping enzymes are restricted to the nucleus. Helicase region probably exhibits NTPase and RNA unwinding activities (Potential). It also acts as a suppressor of RNA-mediated gene silencing, also known as post-transcriptional gene silencing (PTGS), a mechanism of plant viral defense that limits the accumulation of viral RNAs. May mediate silencing suppression through either inhibition of HEN1-mediated siRNA or siRNA demethylation. The sequence is that of Replicase large subunit from Tomato mosaic virus (strain L) (ToMV).